We begin with the raw amino-acid sequence, 276 residues long: Octopine-binding periplasmic protein (276 aa).

Residues 1–20 (MKLKTILCAALLLVAGQAAA) form the signal peptide. Cysteine 57 and cysteine 64 are disulfide-bonded.

This sequence belongs to the bacterial solute-binding protein 3 family.

It is found in the periplasm. Component of the octopine active transport system probably consisting of four subunits: Q, M, P and T. The chain is Octopine-binding periplasmic protein (occT) from Agrobacterium tumefaciens (strain Ach5).